The chain runs to 1023 residues: Sodium/potassium-transporting ATPase subunit alpha-1 (1023 aa).

The propeptide occupies 1–5 (MAFKV). The segment covering 1-11 (MAFKVGRDKYE) has biased composition (basic and acidic residues). A disordered region spans residues 1–38 (MAFKVGRDKYEPAAVSEQGDKKGKKGKKDRDMDELKKE). Topologically, residues 6-87 (GRDKYEPAAV…NALTPPPTTP (82 aa)) are cytoplasmic. Lys9 carries the post-translational modification N6-acetyllysine. Tyr10 carries the phosphotyrosine modification. Position 16 is a phosphoserine; by PKC (Ser16). Lys21 bears the N6-acetyllysine mark. Basic and acidic residues predominate over residues 28–38 (KDRDMDELKKE). Phosphoserine occurs at positions 40 and 47. A phosphoinositide-3 kinase binding region spans residues 82-84 (PPP). The chain crosses the membrane as a helical span at residues 88 to 108 (EWIKFCRQLFGGFSMLLWIGA). The Extracellular portion of the chain corresponds to 109–131 (ILCFLAYSIQAATEEEPQNDNLY). The helical transmembrane segment at 132 to 152 (LGVVLSAVVIITGCFSYYQEA) threads the bilayer. Residues 153-288 (KSSKIMESFK…GGQTPIAAEI (136 aa)) are Cytoplasmic-facing. The segment at 216-235 (SSLTGESEPQTRSPDFTNEN) is disordered. The residue at position 228 (Ser228) is a Phosphoserine. Tyr260 is subject to Phosphotyrosine. A helical transmembrane segment spans residues 289–308 (EHFIHIITGVAVFLGVSFFI). At 309–320 (LSLILEYTWLEA) the chain is on the extracellular side. A helical transmembrane segment spans residues 321–338 (VIFLIGIIVANVPEGLLA). The Cytoplasmic segment spans residues 339–772 (TVTVCLTLTA…EEGRLIFDNL (434 aa)). The 4-aspartylphosphate intermediate role is filled by Asp376. Residues Ser452 and Ser484 each carry the phosphoserine modification. Lys487 serves as a coordination point for ATP. Residue Tyr542 is modified to Phosphotyrosine. The segment at 596–717 (RAAVPDAVGK…QGAIVAVTGD (122 aa)) is mediates interaction with SCN7A. Residue Lys661 is modified to N6-succinyllysine. 2 positions are modified to phosphoserine: Ser668 and Ser675. Residues Asp717 and Asp721 each contribute to the Mg(2+) site. A helical membrane pass occupies residues 773–792 (KKSIAYTLTSNIPEITPFLI). At 793 to 802 (FIIANIPLPL) the chain is on the extracellular side. Residues 803 to 823 (GTVTILCIDLGTDMVPAISLA) form a helical membrane-spanning segment. Topologically, residues 824–843 (YEQAESDIMKRQPRNPKTDK) are cytoplasmic. Residues 844–866 (LVNERLISTAYGQIGMIQALGGF) traverse the membrane as a helical segment. The Extracellular segment spans residues 867–918 (FTYFVILAENGFLPLHLLGLRVDWDDRWINDVEDSYGQQWTYEQRKIVEFTC). The chain crosses the membrane as a helical span at residues 919 to 938 (HTAFFVSIVVVQWADLVICK). Topologically, residues 939 to 951 (TRRNSVFQQGMKN) are cytoplasmic. Position 943 is a phosphoserine; by PKA (Ser943). The chain crosses the membrane as a helical span at residues 952-970 (KILIFGLFEETALAAFLSY). Residues 971–985 (CPGMGVALRMYPLKP) lie on the Extracellular side of the membrane. The chain crosses the membrane as a helical span at residues 986 to 1006 (TWWFCAFPYSLLIFVYDEVRK). At 1007–1023 (LIIRRRPGGWVEKETYY) the chain is on the cytoplasmic side.

Belongs to the cation transport ATPase (P-type) (TC 3.A.3) family. Type IIC subfamily. As to quaternary structure, the sodium/potassium-transporting ATPase is composed of a catalytic alpha subunit, an auxiliary non-catalytic beta subunit and an additional regulatory subunit. Interacts with regulatory subunit FXYD1. Interacts with regulatory subunit FXYD3. Interacts with SIK1. Interacts with SLC35G1 and STIM1. Interacts with CLN3; this interaction regulates the sodium/potassium-transporting ATPase complex localization at the plasma membrane. Interacts with SCN7A; activates ATP1A1 P-type sodium:potassium-exchanging transporter activity which indirectly signals to nearby neurons to regulate sodium homeostasis. Post-translationally, phosphorylation on Tyr-10 modulates pumping activity. Phosphorylation of Ser-943 by PKA modulates the response of ATP1A1 to PKC. Dephosphorylation by protein phosphatase 2A (PP2A) following increases in intracellular sodium, leading to increase catalytic activity.

It is found in the cell membrane. The protein localises to the basolateral cell membrane. It localises to the sarcolemma. The protein resides in the cell projection. Its subcellular location is the axon. It is found in the melanosome. The catalysed reaction is K(+)(out) + Na(+)(in) + ATP + H2O = K(+)(in) + Na(+)(out) + ADP + phosphate + H(+). Functionally, this is the catalytic component of the active enzyme, which catalyzes the hydrolysis of ATP coupled with the exchange of sodium and potassium ions across the plasma membrane. This action creates the electrochemical gradient of sodium and potassium ions, providing the energy for active transport of various nutrients. Could also be part of an osmosensory signaling pathway that senses body-fluid sodium levels and controls salt intake behavior as well as voluntary water intake to regulate sodium homeostasis. The polypeptide is Sodium/potassium-transporting ATPase subunit alpha-1 (ATP1A1) (Pongo abelii (Sumatran orangutan)).